Consider the following 469-residue polypeptide: 3-isopropylmalate dehydratase large subunit (469 aa).

[4Fe-4S] cluster-binding residues include cysteine 347, cysteine 410, and cysteine 413.

Belongs to the aconitase/IPM isomerase family. LeuC type 1 subfamily. In terms of assembly, heterodimer of LeuC and LeuD. [4Fe-4S] cluster is required as a cofactor.

The catalysed reaction is (2R,3S)-3-isopropylmalate = (2S)-2-isopropylmalate. The protein operates within amino-acid biosynthesis; L-leucine biosynthesis; L-leucine from 3-methyl-2-oxobutanoate: step 2/4. Its function is as follows. Catalyzes the isomerization between 2-isopropylmalate and 3-isopropylmalate, via the formation of 2-isopropylmaleate. This chain is 3-isopropylmalate dehydratase large subunit, found in Burkholderia orbicola (strain MC0-3).